We begin with the raw amino-acid sequence, 390 residues long: Chorismate synthase (390 aa).

Residues R40 and R46 each coordinate NADP(+). FMN-binding positions include 129 to 131 (RAS), 249 to 250 (QA), G294, 309 to 313 (KPIPT), and R335.

The protein belongs to the chorismate synthase family. As to quaternary structure, homotetramer. Requires FMNH2 as cofactor.

The catalysed reaction is 5-O-(1-carboxyvinyl)-3-phosphoshikimate = chorismate + phosphate. It functions in the pathway metabolic intermediate biosynthesis; chorismate biosynthesis; chorismate from D-erythrose 4-phosphate and phosphoenolpyruvate: step 7/7. Catalyzes the anti-1,4-elimination of the C-3 phosphate and the C-6 proR hydrogen from 5-enolpyruvylshikimate-3-phosphate (EPSP) to yield chorismate, which is the branch point compound that serves as the starting substrate for the three terminal pathways of aromatic amino acid biosynthesis. This reaction introduces a second double bond into the aromatic ring system. This chain is Chorismate synthase, found in Desulforudis audaxviator (strain MP104C).